Here is a 285-residue protein sequence, read N- to C-terminus: Tryptophan synthase alpha chain (285 aa).

Catalysis depends on proton acceptor residues E53 and D64.

The protein belongs to the TrpA family. As to quaternary structure, tetramer of two alpha and two beta chains.

It carries out the reaction (1S,2R)-1-C-(indol-3-yl)glycerol 3-phosphate + L-serine = D-glyceraldehyde 3-phosphate + L-tryptophan + H2O. The protein operates within amino-acid biosynthesis; L-tryptophan biosynthesis; L-tryptophan from chorismate: step 5/5. The alpha subunit is responsible for the aldol cleavage of indoleglycerol phosphate to indole and glyceraldehyde 3-phosphate. The sequence is that of Tryptophan synthase alpha chain from Bordetella parapertussis (strain 12822 / ATCC BAA-587 / NCTC 13253).